Here is a 339-residue protein sequence, read N- to C-terminus: Phenylalanine--tRNA ligase alpha subunit (339 aa).

Glu-250 serves as a coordination point for Mg(2+).

This sequence belongs to the class-II aminoacyl-tRNA synthetase family. Phe-tRNA synthetase alpha subunit type 1 subfamily. Tetramer of two alpha and two beta subunits. Requires Mg(2+) as cofactor.

The protein localises to the cytoplasm. The enzyme catalyses tRNA(Phe) + L-phenylalanine + ATP = L-phenylalanyl-tRNA(Phe) + AMP + diphosphate + H(+). The polypeptide is Phenylalanine--tRNA ligase alpha subunit (Bacteroides fragilis (strain ATCC 25285 / DSM 2151 / CCUG 4856 / JCM 11019 / LMG 10263 / NCTC 9343 / Onslow / VPI 2553 / EN-2)).